The following is a 217-amino-acid chain: 3,4-dihydroxy-2-butanone 4-phosphate synthase (217 aa).

Residues 37–38 (RE), D42, 150–154 (RGGHT), and E174 each bind D-ribulose 5-phosphate. Residue E38 coordinates Mg(2+). A Mg(2+)-binding site is contributed by H153.

The protein belongs to the DHBP synthase family. In terms of assembly, homodimer. It depends on Mg(2+) as a cofactor. Mn(2+) serves as cofactor.

The enzyme catalyses D-ribulose 5-phosphate = (2S)-2-hydroxy-3-oxobutyl phosphate + formate + H(+). The protein operates within cofactor biosynthesis; riboflavin biosynthesis; 2-hydroxy-3-oxobutyl phosphate from D-ribulose 5-phosphate: step 1/1. In terms of biological role, catalyzes the conversion of D-ribulose 5-phosphate to formate and 3,4-dihydroxy-2-butanone 4-phosphate. The sequence is that of 3,4-dihydroxy-2-butanone 4-phosphate synthase from Escherichia fergusonii (strain ATCC 35469 / DSM 13698 / CCUG 18766 / IAM 14443 / JCM 21226 / LMG 7866 / NBRC 102419 / NCTC 12128 / CDC 0568-73).